Here is a 486-residue protein sequence, read N- to C-terminus: MTTVYTLVSWLAILGYWLLIAGVTLRILMKRRAVPSAMAWLLIIYILPLVGIIAYLAVGELHLGKRRAERARAMWPSTAKWLNDLKACKHIFAEENSSVAAPLFKLCERRQGIAGVKGNQLQLMTESDDVMQALIRDIQLARHNIEMVFYIWQPGGMADQVAESLMAAARRGIHCRLMLDSAGSVAFFRSPWPELMRNAGIEVVEALKVNLMRVFLRRMDLRQHRKMIMIDNYIAYTGSMNMVDPRYFKQDAGVGQWIDLMARMEGPIATAMGIIYSCDWEIETGKRILPPPPDVNIMPFEQASGHTIHTIASGPGFPEDLIHQALLTAAYSAREYLIMTTPYFVPSDDLLHAICTAAQRGVDVSIILPRKNDSMLVGWASRAFFTELLAAGVKIYQFEGGLLHTKSVLVDGELSLVGTVNLDMRSLWLNFEITLAIDDKGFGADLAAVQDDYISRSRLLDARLWLKRPLWQRVAERLFYFFSPLL.

Transmembrane regions (helical) follow at residues 3–23 (TVYT…IAGV) and 38–58 (MAWL…YLAV). 2 consecutive PLD phosphodiesterase domains span residues 219–246 (MDLR…VDPR) and 399–426 (EGGL…DMRS). Catalysis depends on residues H224, K226, D231, H404, K406, and D411.

This sequence belongs to the phospholipase D family. Cardiolipin synthase subfamily. ClsA sub-subfamily.

It localises to the cell inner membrane. The catalysed reaction is 2 a 1,2-diacyl-sn-glycero-3-phospho-(1'-sn-glycerol) = a cardiolipin + glycerol. In terms of biological role, catalyzes the reversible phosphatidyl group transfer from one phosphatidylglycerol molecule to another to form cardiolipin (CL) (diphosphatidylglycerol) and glycerol. The sequence is that of Cardiolipin synthase A from Escherichia coli O7:K1 (strain IAI39 / ExPEC).